The sequence spans 118 residues: Turripeptide NCR-01 (118 aa).

A signal peptide spans 1-16 (MLRLILAVALVAACLA). The interval 63–118 (QGFQGFLPQPHQKRDSYQHGGYQHQQSFDNFQGSGGMNNDNSDDSFALRNFNNDGY) is disordered. Over residues 85-102 (QHQQSFDNFQGSGGMNND) the composition is skewed to polar residues.

As to expression, expressed by the venom duct.

The protein resides in the secreted. This is Turripeptide NCR-01 from Gemmula speciosa (Splendid gem-turris).